The sequence spans 193 residues: Potassium-transporting ATPase KdpC subunit (193 aa).

Residues 10 to 30 (AAIIIFSVLTGVIYPALVTVI) traverse the membrane as a helical segment.

Belongs to the KdpC family. In terms of assembly, the system is composed of three essential subunits: KdpA, KdpB and KdpC.

The protein resides in the cell membrane. Functionally, part of the high-affinity ATP-driven potassium transport (or Kdp) system, which catalyzes the hydrolysis of ATP coupled with the electrogenic transport of potassium into the cytoplasm. This subunit acts as a catalytic chaperone that increases the ATP-binding affinity of the ATP-hydrolyzing subunit KdpB by the formation of a transient KdpB/KdpC/ATP ternary complex. The chain is Potassium-transporting ATPase KdpC subunit from Herpetosiphon aurantiacus (strain ATCC 23779 / DSM 785 / 114-95).